Here is a 568-residue protein sequence, read N- to C-terminus: Kelch-like protein 12 (568 aa).

The BTB domain maps to 33-100 (CDVTLRVEQK…VYTETVHVTV (68 aa)). One can recognise a BACK domain in the interval 135 to 236 (CLGIRDFAET…LTPRYITDVI (102 aa)). Kelch repeat units follow at residues 282–329 (VLLV…SLHD), 331–379 (IYVI…TLGD), 380–426 (MIYV…VASG), 427–473 (VIYC…LLND), 475–520 (IYVV…VLRG), and 522–567 (LYAI…VLRE). Residues 405-568 (QWSMLGDMQT…DAGVCVLREK (164 aa)) form an interaction with DVL3 region.

In terms of assembly, component of the BCR(KLHL12) E3 ubiquitin ligase complex, at least composed of CUL3 and KLHL12 and RBX1. This complex interacts with DVL3 upon activation of the Wnt signaling pathway by WNT3A. Interacts with DRD4, KLHL2 and SEC31A. Interacts with PEF1 and PDCD6/ALG-2; interaction takes place in response to cytosolic calcium increase and leads to bridge together the BCR(KLHL12) complex and SEC31 (SEC31A or SEC31B). In terms of processing, ubiquitinated by the SCF(FBXL17) complex, leading to its degradation by the proteasome: ubiquitination by the SCF(FBXL17) complex takes place when aberrant BTB domain dimers are formed. In terms of tissue distribution, ubiquitously expressed. Highly expressed in testis and at lower levels in the submandibular salivary gland.

Its subcellular location is the cytoplasmic vesicle. The protein localises to the COPII-coated vesicle. The protein operates within protein modification; protein ubiquitination. In terms of biological role, substrate-specific adapter of a BCR (BTB-CUL3-RBX1) E3 ubiquitin ligase complex that acts as a negative regulator of Wnt signaling pathway and ER-Golgi transport. The BCR(KLHL12) complex is involved in ER-Golgi transport by regulating the size of COPII coats, thereby playing a key role in collagen export, which is required for embryonic stem (ES) cells division: BCR(KLHL12) acts by mediating monoubiquitination of SEC31 (SEC31A or SEC31B). The BCR(KLHL12) complex is also involved in neural crest specification: in response to cytosolic calcium increase, interacts with the heterodimer formed with PEF1 and PDCD6/ALG-2, leading to bridge together the BCR(KLHL12) complex and SEC31 (SEC31A or SEC31B), promoting monoubiquitination of SEC31 and subsequent collagen export. As part of the BCR(KLHL12) complex, also acts as a negative regulator of the Wnt signaling pathway by mediating ubiquitination and subsequent proteolysis of DVL3. The BCR(KLHL12) complex also mediates polyubiquitination of DRD4 and PEF1, without leading to degradation of these proteins. The polypeptide is Kelch-like protein 12 (KLHL12) (Homo sapiens (Human)).